Here is a 363-residue protein sequence, read N- to C-terminus: Flagellar P-ring protein (363 aa).

Residues 1–20 (MKKFTLLLLCFVLPMTSAYA) form the signal peptide.

This sequence belongs to the FlgI family. In terms of assembly, the basal body constitutes a major portion of the flagellar organelle and consists of four rings (L,P,S, and M) mounted on a central rod.

It is found in the periplasm. The protein resides in the bacterial flagellum basal body. Functionally, assembles around the rod to form the L-ring and probably protects the motor/basal body from shearing forces during rotation. The chain is Flagellar P-ring protein from Vibrio vulnificus (strain YJ016).